We begin with the raw amino-acid sequence, 490 residues long: Bifunctional protein HldE (490 aa).

Residues 1 to 330 form a ribokinase region; it reads MSRFDTLLQS…RKILPHASLA (330 aa). 205 to 208 contacts ATP; it reads NRKE. Aspartate 275 is an active-site residue. The tract at residues 358–490 is cytidylyltransferase; it reads FTNGCFDILH…LVEKAREGTT (133 aa).

It in the N-terminal section; belongs to the carbohydrate kinase PfkB family. In the C-terminal section; belongs to the cytidylyltransferase family. In terms of assembly, homodimer.

It catalyses the reaction D-glycero-beta-D-manno-heptose 7-phosphate + ATP = D-glycero-beta-D-manno-heptose 1,7-bisphosphate + ADP + H(+). It carries out the reaction D-glycero-beta-D-manno-heptose 1-phosphate + ATP + H(+) = ADP-D-glycero-beta-D-manno-heptose + diphosphate. Its pathway is nucleotide-sugar biosynthesis; ADP-L-glycero-beta-D-manno-heptose biosynthesis; ADP-L-glycero-beta-D-manno-heptose from D-glycero-beta-D-manno-heptose 7-phosphate: step 1/4. The protein operates within nucleotide-sugar biosynthesis; ADP-L-glycero-beta-D-manno-heptose biosynthesis; ADP-L-glycero-beta-D-manno-heptose from D-glycero-beta-D-manno-heptose 7-phosphate: step 3/4. Its function is as follows. Catalyzes the phosphorylation of D-glycero-D-manno-heptose 7-phosphate at the C-1 position to selectively form D-glycero-beta-D-manno-heptose-1,7-bisphosphate. Functionally, catalyzes the ADP transfer from ATP to D-glycero-beta-D-manno-heptose 1-phosphate, yielding ADP-D-glycero-beta-D-manno-heptose. This Rhodopseudomonas palustris (strain BisB5) protein is Bifunctional protein HldE.